The chain runs to 275 residues: 4-deoxy-L-threo-5-hexosulose-uronate ketol-isomerase (275 aa).

4 residues coordinate Zn(2+): His193, His195, Glu200, and His242.

It belongs to the KduI family. Requires Zn(2+) as cofactor.

The catalysed reaction is 5-dehydro-4-deoxy-D-glucuronate = 3-deoxy-D-glycero-2,5-hexodiulosonate. Its pathway is glycan metabolism; pectin degradation; 2-dehydro-3-deoxy-D-gluconate from pectin: step 4/5. Its function is as follows. Catalyzes the isomerization of 5-dehydro-4-deoxy-D-glucuronate to 3-deoxy-D-glycero-2,5-hexodiulosonate. This Bacillus licheniformis (strain ATCC 14580 / DSM 13 / JCM 2505 / CCUG 7422 / NBRC 12200 / NCIMB 9375 / NCTC 10341 / NRRL NRS-1264 / Gibson 46) protein is 4-deoxy-L-threo-5-hexosulose-uronate ketol-isomerase.